Consider the following 490-residue polypeptide: Nuclear distribution protein PAC1 (490 aa).

Residues Ser65 to Asn96 adopt a coiled-coil conformation. WD repeat units follow at residues Gln118–Pro157, Ala163–Asn204, Gly205–Ser245, Glu251–Met290, Gly293–Ile327, Pro328–His367, Gly388–Ser427, and Gly436–Lys487.

This sequence belongs to the WD repeat LIS1/nudF family. Self-associates. Interacts with NDL1 and dynein.

Its subcellular location is the cytoplasm. The protein resides in the cytoskeleton. It localises to the spindle pole. Functionally, positively regulates the activity of the minus-end directed microtubule motor protein dynein. Plays a central role in positioning the mitotic spindle at the bud neck during cell division. Targets cytoplasmic dynein to microtubule plus ends, thereby promoting dynein-mediated microtubule sliding along the bud cortex and consequently the movement of the mitotic spindle to the bud neck. The sequence is that of Nuclear distribution protein PAC1 from Candida tropicalis (strain ATCC MYA-3404 / T1) (Yeast).